Reading from the N-terminus, the 646-residue chain is Epithelial sodium channel subunit beta-2 (646 aa).

At 1–57 (MIQGKLKRLKRYFTRALHRIQKGPGYTYKELLVWFCDNTNTHGPKRIIKEGPKKRVM) the chain is on the cytoplasmic side. A helical transmembrane segment spans residues 58–78 (WFILTLVFAGLVFWQWGLLIL). At 79 to 551 (TYLSYGVSVS…GGQFGFWMGG (473 aa)) the chain is on the extracellular side. Intrachain disulfides connect C104-C290, C214-C221, C267-C274, C380-C467, C405-C463, C409-C459, C418-C445, and C420-C434. The helical transmembrane segment at 552–572 (SVLCIIEFGEIIIDCMWITIL) threads the bilayer. At 573 to 646 (KLLAWIRNRR…IEPVSSDEEN (74 aa)) the chain is on the cytoplasmic side. Positions 586–646 (QRPQYADPPP…IEPVSSDEEN (61 aa)) are disordered. Positions 610–619 (QHDDGNHVTE) are enriched in basic and acidic residues.

It belongs to the amiloride-sensitive sodium channel (TC 1.A.6) family. SCNN1B subfamily. In terms of assembly, component of the heterotrimeric epithelial sodium channel (ENaC) composed of an alpha/SCNN1A, a beta/SCNN1B and a gamma/SCNN1G subunit.

It localises to the apical cell membrane. The protein resides in the cytoplasmic vesicle membrane. It carries out the reaction Na(+)(in) = Na(+)(out). Its activity is regulated as follows. Originally identified and characterized by its inhibition by the diuretic drug amiloride. Its function is as follows. This is one of the three pore-forming subunits of the heterotrimeric epithelial sodium channel (ENaC), a critical regulator of sodium balance and fluid homeostasis. ENaC operates in epithelial tissues, where it mediates the electrodiffusion of sodium ions from extracellular fluid through the apical membrane of cells, with water following osmotically. This chain is Epithelial sodium channel subunit beta-2 (scnn1b-b), found in Xenopus laevis (African clawed frog).